Consider the following 753-residue polypeptide: Nuclear hormone receptor family member daf-12 (753 aa).

The segment at 1–109 (MGTNGGVIAE…PDDGLLDSSE (109 aa)) is disordered. The span at 20-29 (NPDKVEEPVV) shows a compositional bias: basic and acidic residues. Residues 30–44 (RRKRVTRRRHRRIHS) show a composition bias toward basic residues. Positions 115–190 (QKTCRVCGDH…VGMKKEWILN (76 aa)) form a DNA-binding region, nuclear receptor. 2 consecutive NR C4-type zinc fingers follow at residues 118 to 138 (CRVC…CESC) and 154 to 173 (CPYS…CQKC). The Nuclear localization signal signature appears at 191-206 (EEQLRRRKNSRLNNTG). Disordered regions lie at residues 198-251 (KNSR…TINP), 266-314 (NAMP…GYDP), and 376-410 (GHPM…EKNH). Polar residues predominate over residues 201 to 211 (RLNNTGTCNKR). The span at 212-227 (SQPGNQQSPQGPNQQP) shows a compositional bias: low complexity. 2 stretches are compositionally biased toward polar residues: residues 285–301 (PVGS…SLTM) and 394–410 (MSLS…EKNH). The 238-residue stretch at 516 to 753 (AELKALDAVR…ELPGEFFKIK (238 aa)) folds into the NR LBD domain.

Belongs to the nuclear hormone receptor family. In terms of assembly, interacts with din-1 isoform d. As to expression, expressed throughout muscles of the pharynx. Expressed in epidermal seam cells, the vulva, head neurons, mature spermatheca, uterus and intestine.

The protein resides in the nucleus. Functionally, nuclear receptor which binds directly to response elements in target gene promoters. Activity is modulated by binding of steroid hormone ligands that include dafachronic acids. Regulates expression of genes involved in postembryonic development and the dauer diapause, in response to environmental cues. Inhibits the expression of let-7 family members when bound to corepressor din-1s which is an isoform of din-1. Plays a role in controlling the timing of seam cell development during the larval stages. Has a role in the immune response to bacterial infection, via regulation of let-7 miRNAs. Controls expression of genes that promote the aerobic catabolism of fatty acids for reproductive growth. May be involved in thermotolerance. The sequence is that of Nuclear hormone receptor family member daf-12 from Caenorhabditis elegans.